The following is a 67-amino-acid chain: Protein LITTLE ZIPPER 3 (67 aa).

Residues 14–59 (YIMKENERLRKKAELLNQENQQLLFQLKQKLSKTKNSNNGSNNDNK) adopt a coiled-coil conformation. The disordered stretch occupies residues 42–67 (QKLSKTKNSNNGSNNDNKSSSASGQS).

As to quaternary structure, interacts with REV. Interacts with ATBH-8, ATBH-9, ATB-14 and ATB-15. In terms of tissue distribution, expressed in the adaxial epidermis of the cotyledons and leaves, and in the vascular cylinder of wild-type torpedo stage embryos. Confined in the central zone and the organizing center in the shoot apical meristem.

It localises to the nucleus. In terms of biological role, competitive inhibitor of the HD-ZIPIII transcription factors in shoot apical meristem (SAM) development. Acts by forming non-functional heterodimers. Part of a negative feedback loop. Involved in SAM development and lateral organ patterning. Essential for proper functioning of stem cells in the SAM. This chain is Protein LITTLE ZIPPER 3, found in Arabidopsis thaliana (Mouse-ear cress).